Here is a 146-residue protein sequence, read N- to C-terminus: Villin-like protein ABP41 (146 aa).

It belongs to the villin/gelsolin family. As to quaternary structure, binds to actin. As to expression, expressed in pollen (at protein level).

It is found in the cytoplasm. Its subcellular location is the cytoskeleton. In terms of biological role, ca(2+)-dependent actin filament-severing protein that is required for pollen tube growth. Probably regulates the dynamics of the actin cytoskeleton. It can promote the assembly of monomers into filaments (nucleation) as well as sever filaments already formed. This Lilium davidii (David's lily) protein is Villin-like protein ABP41.